The sequence spans 268 residues: Small ribosomal subunit protein uS3 (268 aa).

The KH type-2 domain occupies 38-106 (IRKLLATGME…QVQLNILEVK (69 aa)). Positions 218–268 (VAAPAGDRPRRERPSRPRRSGATGTTATSTEAGRAATATADAPATTEQKEG) are disordered. The segment covering 237-268 (SGATGTTATSTEAGRAATATADAPATTEQKEG) has biased composition (low complexity).

Belongs to the universal ribosomal protein uS3 family. Part of the 30S ribosomal subunit. Forms a tight complex with proteins S10 and S14.

Binds the lower part of the 30S subunit head. Binds mRNA in the 70S ribosome, positioning it for translation. The protein is Small ribosomal subunit protein uS3 of Rhodococcus jostii (strain RHA1).